We begin with the raw amino-acid sequence, 434 residues long: MKLPILVTLFITLPALCVSSKTPSAPTISAYPKSPGNFKPASGRQNSTSNVCEVKPNQTDAAPGILAAAHTCNNGGTVFLPPGDFVVATALDLTFLNNIDFAIWGNITFKKDIDLWTTQAFQYTFQTASLFWRFGGNNVNIYGDGKGVIDGAGQYWWSAMAEDSSVMRPCLLGTDGLHHATISGLTMLNSPNWFNLIANSTDILISNMTMLVESEISDAPAKNTDGWDIYRSSNIVIQDSRIVNTDDCVSFKPNSTQIVIQNLDCTGSHGISVGSLGQYQGETDIVEDLYIYNISMTDASDVARIKVWPGVPADTSGSTSGGGLGRVRNVTYEHMQSENNDHIISVSQCYESKNQTMCDSYPSKLVIEDVLFKDFKGTTSKKYDPEIGELTCSSPDVCHNITVQDINVTPPSGDSPTFTCNNMGNSNLEDITCA.

An N-terminal signal peptide occupies residues methionine 1–serine 19. Asparagine 46, asparagine 57, asparagine 106, asparagine 199, and asparagine 207 each carry an N-linked (GlcNAc...) asparagine glycan. The PbH1 1 repeat unit spans residues serine 232–proline 253. Aspartate 246 acts as the Proton donor in catalysis. Cysteine 248 and cysteine 265 are joined by a disulfide. Asparagine 254 carries N-linked (GlcNAc...) asparagine glycosylation. The PbH1 2 repeat unit spans residues serine 255 to serine 275. The active site involves histidine 269. Residues asparagine 293, asparagine 329, and asparagine 354 are each glycosylated (N-linked (GlcNAc...) asparagine). Cysteines 392 and 398 form a disulfide. Asparagine 400 carries N-linked (GlcNAc...) asparagine glycosylation.

Belongs to the glycosyl hydrolase 28 family.

The protein localises to the secreted. It carries out the reaction [(1-&gt;4)-alpha-D-galacturonosyl](n) + H2O = alpha-D-galacturonate + [(1-&gt;4)-alpha-D-galacturonosyl](n-1). Specific in hydrolyzing the terminal glycosidic bond of polygalacturonic acid and oligogalacturonates. The protein is Probable exopolygalacturonase A (pgxA) of Aspergillus niger (strain ATCC MYA-4892 / CBS 513.88 / FGSC A1513).